A 38-amino-acid chain; its full sequence is Anthranilate phosphoribosyltransferase (38 aa).

It belongs to the anthranilate phosphoribosyltransferase family. Homodimer.

The catalysed reaction is N-(5-phospho-beta-D-ribosyl)anthranilate + diphosphate = 5-phospho-alpha-D-ribose 1-diphosphate + anthranilate. It participates in amino-acid biosynthesis; L-tryptophan biosynthesis; L-tryptophan from chorismate: step 2/5. Its function is as follows. Catalyzes the transfer of the phosphoribosyl group of 5-phosphorylribose-1-pyrophosphate (PRPP) to anthranilate to yield N-(5'-phosphoribosyl)-anthranilate (PRA). In Serratia marcescens, this protein is Anthranilate phosphoribosyltransferase (trpD).